Reading from the N-terminus, the 454-residue chain is Natural cytotoxicity triggering receptor 3 ligand 1 (454 aa).

An N-terminal signal peptide occupies residues 1 to 24; it reads MTWRAAASTCAALLILLWALTTEG. Topologically, residues 25–262 are extracellular; that stretch reads DLKVEMMAGG…SETEKTDNFS (238 aa). Residues 27–138 enclose the Ig-like V-type domain; it reads KVEMMAGGTQ…LKAQGTVQLE (112 aa). Asn43 and Asn57 each carry an N-linked (GlcNAc...) asparagine glycan. Residues Cys48 and Cys122 are joined by a disulfide bond. 2 interaction with NCR3 regions span residues 59-62 and 127-130; these read TSMG and TPLK. Positions 143–244 constitute an Ig-like C1-type domain; it reads PASRLLLDQV…LHTPLRSNFT (102 aa). Cys163 and Cys228 form a disulfide bridge. Residues Asn174, Asn208, Asn216, Asn242, and Asn260 are each glycosylated (N-linked (GlcNAc...) asparagine). The chain crosses the membrane as a helical span at residues 263–283; the sequence is IHWWPISFIGVGLVLLIVLIP. Residues 284 to 454 are Cytoplasmic-facing; the sequence is WKKICNKSSS…QPPTLLLPLQ (171 aa). Residues 291–429 form a retroviral-Gag-like region; it reads SSSAYTPLKC…APILPVSPIW (139 aa). Positions 395 to 454 are disordered; sequence GKSIDDNSTKSEKQTPREHSDAVPDAPILPVSPIWEPPPATTSTTPVLSSQPPTLLLPLQ. Residues 397 to 416 are compositionally biased toward basic and acidic residues; that stretch reads SIDDNSTKSEKQTPREHSDA. Over residues 435–454 the composition is skewed to low complexity; that stretch reads TTSTTPVLSSQPPTLLLPLQ.

In terms of assembly, monomer. Interacts specifically with NCR3, but not with other natural killer cell-activating receptors, including NCR1, NCR2 and KLRK1. In terms of tissue distribution, not detected in any normal tissue tested. Expressed at the surface of several tumor cell lines including T and B-lymphomas, myeloid leukemias, melanomas, carcinomas and large T SV40 antigen-transformed cells (at protein level).

Its subcellular location is the cell membrane. Its function is as follows. Triggers NCR3-dependent natural killer cell activation. This Homo sapiens (Human) protein is Natural cytotoxicity triggering receptor 3 ligand 1 (NCR3LG1).